The sequence spans 262 residues: Putative ankyrin repeat protein FPV243 (262 aa).

Residues 25 to 54 (YGSTPLFEAICNCSCKNVKLFLENNADINE) form an ANK repeat.

The polypeptide is Putative ankyrin repeat protein FPV243 (Vertebrata (FPV)).